Here is a 781-residue protein sequence, read N- to C-terminus: Homeobox protein SIX4 (781 aa).

Residues 1-10 (MSSSSPTGQI) are compositionally biased toward polar residues. 2 disordered regions span residues 1–55 (MSSS…PLEP) and 270–321 (WFKN…GITN). S2 is modified (N-acetylserine). A DNA-binding region (homeobox) is located at residues 223–282 (GEETVYCFKEKSRNALKELYKQNRYPSPAEKRHLAKITGLSLTQVSNWFKNRRQRDRNPS). Basic and acidic residues-rich tracts occupy residues 278-290 (DRNP…KSES) and 299-308 (ESSKGHEDLS). A Phosphoserine modification is found at S640.

It belongs to the SIX/Sine oculis homeobox family. In terms of assembly, interacts with EYA3; acts cooperatively with EYA3 to transactivate target genes through interaction and nuclear translocation of EYA3 protein.

It is found in the nucleus. It localises to the cytoplasm. In terms of biological role, transcriptional regulator which can act as both a transcriptional repressor and activator by binding a DNA sequence on these target genes and is involved in processes like cell differentiation, cell migration and cell survival. Transactivates gene expression by binding a 5'-[CAT]A[CT][CT][CTG]GA[GAT]-3' motif present in the Trex site and a 5'-TCA[AG][AG]TTNC-3' motif present in the MEF3 site of the muscle-specific genes enhancer. Acts cooperatively with EYA proteins to transactivate their target genes through interaction and nuclear translocation of EYA protein. Acts synergistically with SIX1 to regulate target genes involved in formation of various organs, including muscle, kidney, gonad, ganglia, olfactory epithelium and cranial skeleton. Plays a role in several important steps of muscle development. Controls the genesis of hypaxial myogenic progenitors in the dermomyotome by transactivating PAX3 and the delamination and migration of the hypaxial precursors from the ventral lip to the limb buds through the transactivation of PAX3, MET and LBX1. Controls myoblast determination by transactivating MYF5, MYOD1 and MYF6. Controls somitic differentiation in myocyte through MYOG transactivation. Plays a role in synaptogenesis and sarcomere organization by participating in myofiber specialization during embryogenesis by activating fast muscle program in the primary myotome resulting in an up-regulation of fast muscle genes, including ATP2A1, MYL1 and TNNT3. Simultaneously, is also able to activate inhibitors of slow muscle genes, such as SOX6, HRASLS, and HDAC4, thereby restricting the activation of the slow muscle genes. During muscle regeneration, negatively regulates differentiation of muscle satellite cells through down-regulation of MYOG expression. During kidney development regulates the early stages of metanephros development and ureteric bud formation through regulation of GDNF, SALL1, PAX8 and PAX2 expression. Plays a role in gonad development by regulating both testis determination and size determination. In gonadal sex determination, transactivates ZFPM2 by binding a MEF3 consensus sequence, resulting in SRY up-regulation. In gonadal size determination, transactivates NR5A1 by binding a MEF3 consensus sequence resulting in gonadal precursor cell formation regulation. During olfactory development mediates the specification and patterning of olfactory placode through fibroblast growth factor and BMP4 signaling pathways and also regulates epithelial cell proliferation during placode formation. Promotes survival of sensory neurons during early trigeminal gangliogenesis. In the developing dorsal root ganglia, up-regulates SLC12A2 transcription. Regulates early thymus/parathyroid organogenesis through regulation of GCM2 and FOXN1 expression. Forms gustatory papillae during development of the tongue. Also plays a role during embryonic cranial skeleton morphogenesis. The chain is Homeobox protein SIX4 (SIX4) from Homo sapiens (Human).